We begin with the raw amino-acid sequence, 615 residues long: (+)-alpha-pinene synthase TPS2, chloroplastic (615 aa).

The N-terminal 55 residues, 1 to 55 (MHCMAVRHFAPSSSLSIFSSTNINNHFFGREIFTPKTSNITTKKSRSRPNCNPIQ), are a transit peptide targeting the chloroplast. Residues R330, D367, D371, R509, and D512 each contribute to the (2E)-geranyl diphosphate site. Residues D367 and D371 each coordinate Mg(2+). Positions 367-371 (DDIYD) match the DDXXD motif motif. Mg(2+)-binding residues include D512, T516, and E520.

The protein belongs to the terpene synthase family. Tpsb subfamily. It depends on Mg(2+) as a cofactor. Mn(2+) serves as cofactor. The cofactor is K(+). In terms of tissue distribution, trichome.

Its subcellular location is the plastid. It localises to the chloroplast. The catalysed reaction is (2E)-geranyl diphosphate = (1R,5R)-alpha-pinene + diphosphate. The enzyme catalyses (2E)-geranyl diphosphate = (1R,5R)-beta-pinene + diphosphate. It catalyses the reaction (2E)-geranyl diphosphate = (4S)-limonene + diphosphate. It carries out the reaction (2E)-geranyl diphosphate = beta-myrcene + diphosphate. Its pathway is secondary metabolite biosynthesis; terpenoid biosynthesis. The protein operates within terpene metabolism; (-)-alpha-pinene biosynthesis; (-)-alpha-pinene from geranyl diphosphate: step 1/1. Involved in monoterpene (C10) olefins biosynthesis, constituants of cannabinoids and terpenoids-rich resins. Catalyzes mainly the conversion of (2E)-geranyl diphosphate to (+)-alpha-pinene, and also produces minor products such as (-)-limonene, (+)-beta-pinene and beta-myrcene. The sequence is that of (+)-alpha-pinene synthase TPS2, chloroplastic from Cannabis sativa (Hemp).